A 21-amino-acid polypeptide reads, in one-letter code: Trypsin (21 aa).

The protein belongs to the peptidase S1 family.

It is found in the secreted. The protein localises to the extracellular space. It carries out the reaction Preferential cleavage: Arg-|-Xaa, Lys-|-Xaa.. This chain is Trypsin, found in Apis mellifera scutellata (Africanized honey bee).